We begin with the raw amino-acid sequence, 404 residues long: Caspase b (404 aa).

Positions 1 to 171 (MEDITQLLSD…DIYTPRSGTQ (171 aa)) are excised as a propeptide. The region spanning 8 to 80 (LSDVLEDLVE…LRKIKQNERA (73 aa)) is the Pyrin domain. Active-site residues include histidine 249 and cysteine 296. Residues 301–316 (SSGVLAQDSVFASDSW) constitute a propeptide that is removed on maturation.

This sequence belongs to the peptidase C14A family. In terms of assembly, upon direct LPS-binding, forms large homooligomers, resulting in its activation. These oligomers are often referred to as 'non-canonical inflammasomes'. Heterotetramer that consists of two anti-parallel arranged heterodimers, each one formed by a 20 kDa (p20) and a 10 kDa (p10) subunit. Interacts with caspa. Interacts with pycard; the interaction only occurs in the presence of nlrp1. Component of NLRP1 inflammasomes. Inflammasomes are supramolecular complexes that assemble in the cytosol in response to pathogens and other damage-associated signals and play critical roles in innate immunity and inflammation. The NLRP1 inflammasome is composed of the signal sensor nlrp1, and the adapter pycard (asc), which recruit effector pro-inflammatory caspases caspa and/or caspb. The interaction between nlrp1 and pycard is required for the sequential recruitment of caspa and then caspb. Caspa is preferentially recruited first and this causes the cleavage of pro-il1b into the midformed il1b. This is followed by the recruitment of caspb, which is activated and cleaves the midformed il1b resulting in il1b maturation. In terms of processing, the two subunits are derived from the precursor sequence by an autocatalytic mechanism. Expressed in the spleen, kidney and liver, and highly expressed in the gills and gut.

Its subcellular location is the inflammasome. The protein localises to the cytoplasm. The enzyme catalyses Strict requirement for Asp at the P1 position. It has a preferred cleavage sequence of Tyr-Val-Ala-Asp-|- but also cleaves at Asp-Glu-Val-Asp-|-.. Activated by homooligomerization induced by direct binding to cytosolic LPS. Functionally, thiol protease which cleaves IL-1 beta (il1b), releasing the mature cytokine which is involved in a variety of inflammatory processes, and mediates apoptosis. Component of the NLRP1 inflammasome, which plays a crucial role in innate immunity and inflammation. In response to pathogens and other damage-associated signals, recruited to the NLRP1 inflammasome in its precursor form following the recruitment of caspase caspa. Its subsequent activation causes the cleavage of the midformed pro-il1b and results in il1b maturation and secretion in the extracellular milieu. Activated by direct binding to bacterial lipopolysaccharides (LPS), which causes non-canonical inflammasome activation and results in the pyroptosis of infected cells and their extrusion into the gut lumen, as well as in cytokine secretion. Plays a crucial role in the restriction of bacterial infection to intestinal sites. Pyroptosis limits bacterial replication, while cytokine secretion promotes the recruitment and activation of immune cells and triggers mucosal inflammation. Promotes pyroptosis by bacterial infection by E.piscicida. The protein is Caspase b of Danio rerio (Zebrafish).